The chain runs to 614 residues: MALPTQQSEELRLYQQTLLQDGLKDMLDHNNFIDCVLKIQGKEFPCHRLVLASCSPYFRAMFLSDLEESKKKEIDLEDVDPDVMGKILHYIYTSEIEITEKNVQDIFSVANMFQIPSIFTVCVSFLQKKLCLSNCLAIFRLGLLLDCPRLAVSARDFVCDRFNLIARDSELYELSPDELIAVISSDSLNIEKEEDVFEVVMKWASKEKEKRTKALPVIFESIRFCLIPQDYIKNKVEKHELVKPNKELLKKLQIVKDAQQGKLPSLKKKTSAKASEGKDGEQVVNGELDEEEEALPGILNDTLRFGMFLKDMIFMISDTGAVAYDPSANECFFASLSAQIPKNHVSLATKENQLFVAGGLYYNEESKEEPLSSYFLQFDHLDSDWLGMPPVPSARCLFGLGESENSIYLIGGKELKEGEQMLDSVLCYDRPSFKWGESDPLPYKVYGHTVVSHDNLVYVLGGKGNEKKCLKRVCVYNPKKFEWKDLAPMKTGRSLFGATVHKGKIFIAAGVTDTGLTNTIEAYDIKTNKWEDFTEFPQERSSLSLVSMNGTLYAIGGFATIENESEELVPTELNDIWRFNEEEKKWEGILREIRYASGATFIAARLNILRLTKM.

Positions I33–E100 constitute a BTB domain. One can recognise a BACK domain in the interval C135–E237. 5 Kelch repeats span residues Q353–N405, S406–N455, L456–G503, K504–G550, and L552–L606.

The protein belongs to the KLHL40 family. Component of the BCR(KLHL40) E3 ubiquitin ligase complex.

The protein resides in the cytoplasm. It is found in the myofibril. The protein localises to the sarcomere. It localises to the a band. Its subcellular location is the i band. Functionally, substrate-specific adapter of a BCR (BTB-CUL3-RBX1) E3 ubiquitin ligase complex that acts as a key regulator of skeletal muscle development. This Xenopus laevis (African clawed frog) protein is Kelch-like protein 40 (klhl40).